The chain runs to 178 residues: Large ribosomal subunit protein uL6 (178 aa).

Belongs to the universal ribosomal protein uL6 family. Part of the 50S ribosomal subunit.

Functionally, this protein binds to the 23S rRNA, and is important in its secondary structure. It is located near the subunit interface in the base of the L7/L12 stalk, and near the tRNA binding site of the peptidyltransferase center. In Frankia alni (strain DSM 45986 / CECT 9034 / ACN14a), this protein is Large ribosomal subunit protein uL6.